We begin with the raw amino-acid sequence, 256 residues long: Thiazole synthase (256 aa).

Lys95 serves as the catalytic Schiff-base intermediate with DXP. 1-deoxy-D-xylulose 5-phosphate-binding positions include Gly156, 182-183, and 204-205; these read AG and NT.

This sequence belongs to the ThiG family. As to quaternary structure, homotetramer. Forms heterodimers with either ThiH or ThiS.

It is found in the cytoplasm. It carries out the reaction [ThiS sulfur-carrier protein]-C-terminal-Gly-aminoethanethioate + 2-iminoacetate + 1-deoxy-D-xylulose 5-phosphate = [ThiS sulfur-carrier protein]-C-terminal Gly-Gly + 2-[(2R,5Z)-2-carboxy-4-methylthiazol-5(2H)-ylidene]ethyl phosphate + 2 H2O + H(+). Its pathway is cofactor biosynthesis; thiamine diphosphate biosynthesis. Catalyzes the rearrangement of 1-deoxy-D-xylulose 5-phosphate (DXP) to produce the thiazole phosphate moiety of thiamine. Sulfur is provided by the thiocarboxylate moiety of the carrier protein ThiS. In vitro, sulfur can be provided by H(2)S. This is Thiazole synthase from Escherichia coli O127:H6 (strain E2348/69 / EPEC).